A 195-amino-acid chain; its full sequence is Iron-sulfur flavoprotein AF_1519 (195 aa).

[4Fe-4S] cluster is bound by residues Cys45, Cys48, Cys51, and Cys57.

The protein belongs to the SsuE family. Isf subfamily. In terms of assembly, homodimer. Requires FMN as cofactor. The cofactor is [4Fe-4S] cluster.

Its function is as follows. Redox-active protein probably involved in electron transport. This chain is Iron-sulfur flavoprotein AF_1519, found in Archaeoglobus fulgidus (strain ATCC 49558 / DSM 4304 / JCM 9628 / NBRC 100126 / VC-16).